We begin with the raw amino-acid sequence, 177 residues long: Large ribosomal subunit protein uL5 (177 aa).

The protein belongs to the universal ribosomal protein uL5 family. In terms of assembly, part of the 50S ribosomal subunit; part of the 5S rRNA/L5/L18/L25 subcomplex. Contacts the 5S rRNA and the P site tRNA. Forms a bridge to the 30S subunit in the 70S ribosome.

In terms of biological role, this is one of the proteins that bind and probably mediate the attachment of the 5S RNA into the large ribosomal subunit, where it forms part of the central protuberance. In the 70S ribosome it contacts protein S13 of the 30S subunit (bridge B1b), connecting the 2 subunits; this bridge is implicated in subunit movement. Contacts the P site tRNA; the 5S rRNA and some of its associated proteins might help stabilize positioning of ribosome-bound tRNAs. This Wolbachia pipientis wMel protein is Large ribosomal subunit protein uL5.